The primary structure comprises 88 residues: Small ribosomal subunit protein uS15c (88 aa).

This sequence belongs to the universal ribosomal protein uS15 family. In terms of assembly, part of the 30S ribosomal subunit.

Its subcellular location is the plastid. The protein resides in the chloroplast. The chain is Small ribosomal subunit protein uS15c (rps15) from Physcomitrium patens (Spreading-leaved earth moss).